We begin with the raw amino-acid sequence, 1430 residues long: DNA-directed RNA polymerase subunit beta' (1430 aa).

Zn(2+) is bound by residues Cys-70, Cys-72, Cys-85, and Cys-88. 3 residues coordinate Mg(2+): Asp-495, Asp-497, and Asp-499. Zn(2+)-binding residues include Cys-838, Cys-912, Cys-919, and Cys-922.

This sequence belongs to the RNA polymerase beta' chain family. As to quaternary structure, the RNAP catalytic core consists of 2 alpha, 1 beta, 1 beta' and 1 omega subunit. When a sigma factor is associated with the core the holoenzyme is formed, which can initiate transcription. It depends on Mg(2+) as a cofactor. Zn(2+) serves as cofactor.

The catalysed reaction is RNA(n) + a ribonucleoside 5'-triphosphate = RNA(n+1) + diphosphate. Its function is as follows. DNA-dependent RNA polymerase catalyzes the transcription of DNA into RNA using the four ribonucleoside triphosphates as substrates. In Rhodospirillum centenum (strain ATCC 51521 / SW), this protein is DNA-directed RNA polymerase subunit beta'.